A 336-amino-acid polypeptide reads, in one-letter code: Biotin synthase (336 aa).

A Radical SAM core domain is found at 52-279 (KAIQLSTLMS…KSYVRLSAGR (228 aa)). [4Fe-4S] cluster contacts are provided by cysteine 67, cysteine 71, and cysteine 74. 4 residues coordinate [2Fe-2S] cluster: cysteine 111, cysteine 142, cysteine 202, and arginine 274.

It belongs to the radical SAM superfamily. Biotin synthase family. As to quaternary structure, homodimer. Requires [4Fe-4S] cluster as cofactor. It depends on [2Fe-2S] cluster as a cofactor.

The catalysed reaction is (4R,5S)-dethiobiotin + (sulfur carrier)-SH + 2 reduced [2Fe-2S]-[ferredoxin] + 2 S-adenosyl-L-methionine = (sulfur carrier)-H + biotin + 2 5'-deoxyadenosine + 2 L-methionine + 2 oxidized [2Fe-2S]-[ferredoxin]. It functions in the pathway cofactor biosynthesis; biotin biosynthesis; biotin from 7,8-diaminononanoate: step 2/2. Functionally, catalyzes the conversion of dethiobiotin (DTB) to biotin by the insertion of a sulfur atom into dethiobiotin via a radical-based mechanism. The chain is Biotin synthase from Pasteurella multocida (strain Pm70).